A 319-amino-acid chain; its full sequence is L-lactate dehydrogenase (319 aa).

NAD(+)-binding positions include 10–11 (RV), D32, R37, Y62, and 76–77 (GV). Residues Q79, R85, and 117-120 (NPVD) contribute to the substrate site. NAD(+)-binding positions include 115-117 (VTN) and S140. Residue 145 to 148 (DTAR) coordinates substrate. R150 and H165 together coordinate beta-D-fructose 1,6-bisphosphate. H172 serves as the catalytic Proton acceptor. The residue at position 217 (Y217) is a Phosphotyrosine. Residue T226 coordinates substrate.

The protein belongs to the LDH/MDH superfamily. LDH family. Homotetramer.

It is found in the cytoplasm. It catalyses the reaction (S)-lactate + NAD(+) = pyruvate + NADH + H(+). Its pathway is fermentation; pyruvate fermentation to lactate; (S)-lactate from pyruvate: step 1/1. Allosterically activated by fructose 1,6-bisphosphate (FBP). Inactivated by Mn(2+), Co(2+), Cd(2+) and Zn(2+). Catalyzes the conversion of lactate to pyruvate. It is stereospecific for L(+)-lactate. The sequence is that of L-lactate dehydrogenase from Thermotoga maritima (strain ATCC 43589 / DSM 3109 / JCM 10099 / NBRC 100826 / MSB8).